The chain runs to 195 residues: Ribonuclease HII (195 aa).

The RNase H type-2 domain occupies 6-195 (SLIAGVDEVG…KSFISRLKKN (190 aa)). A divalent metal cation contacts are provided by Asp12, Glu13, and Asp108.

The protein belongs to the RNase HII family. The cofactor is Mn(2+). Mg(2+) serves as cofactor.

The protein localises to the cytoplasm. The enzyme catalyses Endonucleolytic cleavage to 5'-phosphomonoester.. Endonuclease that specifically degrades the RNA of RNA-DNA hybrids. In Prochlorococcus marinus (strain NATL2A), this protein is Ribonuclease HII.